A 300-amino-acid chain; its full sequence is Tyrosine recombinase XerD (300 aa).

In terms of domain architecture, Core-binding (CB) spans 5–90 (YQCDPLIDAF…SLRRFYNYLL (86 aa)). One can recognise a Tyr recombinase domain in the interval 111–294 (HLPDSLSESQ…ARARLQELHQ (184 aa)). Active-site residues include R151, K175, H246, R249, and H272. The O-(3'-phospho-DNA)-tyrosine intermediate role is filled by Y281.

The protein belongs to the 'phage' integrase family. XerD subfamily. As to quaternary structure, forms a cyclic heterotetrameric complex composed of two molecules of XerC and two molecules of XerD.

The protein resides in the cytoplasm. Site-specific tyrosine recombinase, which acts by catalyzing the cutting and rejoining of the recombining DNA molecules. The XerC-XerD complex is essential to convert dimers of the bacterial chromosome into monomers to permit their segregation at cell division. It also contributes to the segregational stability of plasmids. This Shewanella oneidensis (strain ATCC 700550 / JCM 31522 / CIP 106686 / LMG 19005 / NCIMB 14063 / MR-1) protein is Tyrosine recombinase XerD.